Consider the following 98-residue polypeptide: NADH-ubiquinone oxidoreductase chain 4L (98 aa).

3 helical membrane-spanning segments follow: residues 1–21 (MNLI…GLIF), 26–46 (IINI…LFVL), and 61–81 (LYIL…VVIL).

It belongs to the complex I subunit 4L family.

It localises to the mitochondrion membrane. The catalysed reaction is a ubiquinone + NADH + 5 H(+)(in) = a ubiquinol + NAD(+) + 4 H(+)(out). Its function is as follows. Core subunit of the mitochondrial membrane respiratory chain NADH dehydrogenase (Complex I) that is believed to belong to the minimal assembly required for catalysis. Complex I functions in the transfer of electrons from NADH to the respiratory chain. The immediate electron acceptor for the enzyme is believed to be ubiquinone. This Dictyostelium discoideum (Social amoeba) protein is NADH-ubiquinone oxidoreductase chain 4L (nad4L).